A 314-amino-acid polypeptide reads, in one-letter code: Aromatic prenyltransferase (314 aa).

It belongs to the aromatic prenyltransferase family.

Its function is as follows. Prenyltransferase that attaches isoprenoid moieties to carbon atoms of aromatic substrates in an enzyme-catalyzed Friedel-Crafts reaction. This is Aromatic prenyltransferase from Arthroderma otae (strain ATCC MYA-4605 / CBS 113480) (Microsporum canis).